The following is a 365-amino-acid chain: Mitogen-activated protein kinase 13 (365 aa).

The region spanning 25 to 308 (YVSPTHVGSG…AAQALTHPFF (284 aa)) is the Protein kinase domain. Residue 31-39 (VGSGAYGSV) participates in ATP binding. The residue at position 47 (serine 47) is a Phosphoserine. Lysine 54 is an ATP binding site. Aspartate 150 functions as the Proton acceptor in the catalytic mechanism. Residue threonine 180 is modified to Phosphothreonine; by MAP2K3, MAP2K4, MAP2K6 and MAP2K7. A TXY motif is present at residues 180-182 (TGY). Phosphotyrosine; by MAP2K3, MAP2K4, MAP2K6 and MAP2K7 is present on tyrosine 182. Position 350 is a phosphoserine (serine 350).

It belongs to the protein kinase superfamily. CMGC Ser/Thr protein kinase family. MAP kinase subfamily. In terms of assembly, interacts with MAPK8IP2. Mg(2+) is required as a cofactor. Dually phosphorylated on Thr-180 and Tyr-182 by MAP2K3/MKK3, MAP2K4/MKK4, MAP2K6/MKK6 and MAP2K7/MKK7, which activates the enzyme. Dephosphorylated by dual specificity phosphatase DUSP1.

The catalysed reaction is L-seryl-[protein] + ATP = O-phospho-L-seryl-[protein] + ADP + H(+). It catalyses the reaction L-threonyl-[protein] + ATP = O-phospho-L-threonyl-[protein] + ADP + H(+). Activated by phosphorylation on threonine and tyrosine by dual specificity kinases, MAP2K3/MKK3, MAP2K6/MKK6, MAP2K4/MKK4 and MAP2K7/MKK7. Activation by ultraviolet radiation, hyperosmotic shock, anisomycin or by TNF-alpha is mediated by MAP2K3/MKK3. Inhibited by dual specificity phosphatase DUSP1. Functionally, serine/threonine kinase which acts as an essential component of the MAP kinase signal transduction pathway. MAPK13 is one of the four p38 MAPKs which play an important role in the cascades of cellular responses evoked by extracellular stimuli such as pro-inflammatory cytokines or physical stress leading to direct activation of transcription factors such as ELK1 and ATF2. Accordingly, p38 MAPKs phosphorylate a broad range of proteins and it has been estimated that they may have approximately 200 to 300 substrates each. MAPK13 is one of the less studied p38 MAPK isoforms. Some of the targets are downstream kinases such as MAPKAPK2, which are activated through phosphorylation and further phosphorylate additional targets. Plays a role in the regulation of protein translation by phosphorylating and inactivating EEF2K. Involved in cytoskeletal remodeling through phosphorylation of MAPT and STMN1. Mediates UV irradiation induced up-regulation of the gene expression of CXCL14. Plays an important role in the regulation of epidermal keratinocyte differentiation, apoptosis and skin tumor development. Phosphorylates the transcriptional activator MYB in response to stress which leads to rapid MYB degradation via a proteasome-dependent pathway. MAPK13 also phosphorylates and down-regulates PRKD1 during regulation of insulin secretion in pancreatic beta cells. The sequence is that of Mitogen-activated protein kinase 13 (MAPK13) from Pan troglodytes (Chimpanzee).